Consider the following 493-residue polypeptide: Cysteine--tRNA ligase (493 aa).

Residue Cys29 participates in Zn(2+) binding. Positions 31-41 (VTVYDLCHLGH) match the 'HIGH' region motif. The interval 154–179 (KLSGRDPDDQQQGASGRTADGEESRK) is disordered. Zn(2+) contacts are provided by Cys213, His238, and Glu242. The 'KMSKS' region signature appears at 270-274 (KMSKS). Lys273 serves as a coordination point for ATP.

Belongs to the class-I aminoacyl-tRNA synthetase family. In terms of assembly, monomer. Zn(2+) is required as a cofactor.

It is found in the cytoplasm. It carries out the reaction tRNA(Cys) + L-cysteine + ATP = L-cysteinyl-tRNA(Cys) + AMP + diphosphate. This is Cysteine--tRNA ligase from Synechococcus sp. (strain CC9605).